A 352-amino-acid chain; its full sequence is Heat-inducible transcription repressor HrcA (352 aa).

The protein belongs to the HrcA family.

Its function is as follows. Negative regulator of class I heat shock genes (grpE-dnaK-dnaJ and groELS operons). Prevents heat-shock induction of these operons. The protein is Heat-inducible transcription repressor HrcA of Latilactobacillus sakei subsp. sakei (strain 23K) (Lactobacillus sakei subsp. sakei).